Consider the following 484-residue polypeptide: Sucrose-6-phosphate hydrolase (484 aa).

Substrate contacts are provided by residues 48-51 (LLND), Gln67, 110-111 (YS), 168-169 (RD), and Glu223. Asp51 is an active-site residue.

Belongs to the glycosyl hydrolase 32 family.

Its subcellular location is the cytoplasm. It carries out the reaction Hydrolysis of terminal non-reducing beta-D-fructofuranoside residues in beta-D-fructofuranosides.. It participates in glycan biosynthesis; sucrose metabolism. Its function is as follows. Enables the bacterium to metabolize sucrose as a sole carbon source. The chain is Sucrose-6-phosphate hydrolase (scrB) from Vibrio alginolyticus.